Consider the following 556-residue polypeptide: 2-succinyl-5-enolpyruvyl-6-hydroxy-3-cyclohexene-1-carboxylate synthase (556 aa).

Belongs to the TPP enzyme family. MenD subfamily. Homodimer. Mg(2+) is required as a cofactor. Mn(2+) serves as cofactor. The cofactor is thiamine diphosphate.

The enzyme catalyses isochorismate + 2-oxoglutarate + H(+) = 5-enolpyruvoyl-6-hydroxy-2-succinyl-cyclohex-3-ene-1-carboxylate + CO2. The protein operates within quinol/quinone metabolism; 1,4-dihydroxy-2-naphthoate biosynthesis; 1,4-dihydroxy-2-naphthoate from chorismate: step 2/7. It functions in the pathway quinol/quinone metabolism; menaquinone biosynthesis. In terms of biological role, catalyzes the thiamine diphosphate-dependent decarboxylation of 2-oxoglutarate and the subsequent addition of the resulting succinic semialdehyde-thiamine pyrophosphate anion to isochorismate to yield 2-succinyl-5-enolpyruvyl-6-hydroxy-3-cyclohexene-1-carboxylate (SEPHCHC). This is 2-succinyl-5-enolpyruvyl-6-hydroxy-3-cyclohexene-1-carboxylate synthase from Escherichia coli (strain ATCC 8739 / DSM 1576 / NBRC 3972 / NCIMB 8545 / WDCM 00012 / Crooks).